The chain runs to 204 residues: uncharacterized protein (204 aa).

Positions 1-17 (MKRLVTGLLALSLFLAA) are cleaved as a signal peptide. The disordered stretch occupies residues 17–100 (ACGQDSDQQK…NNNQANNNQK (84 aa)). C18 is lipidated: N-palmitoyl cysteine. A lipid anchor (S-diacylglycerol cysteine) is attached at C18. Basic and acidic residues predominate over residues 23–70 (DQQKDGNKEKDDKAKTEQQDKKTNDSSKDKKDNKDDSKDVNKDNKDNS). Residues 71-100 (ANDNQQQSNSNATNNDQNQTNNNQANNNQK) are compositionally biased toward low complexity.

Its subcellular location is the cell membrane. This is an uncharacterized protein from Staphylococcus aureus (strain MSSA476).